Here is a 304-residue protein sequence, read N- to C-terminus: MSWIERIKSNITPTRKASIPEGVWTKCDSCGQVLYRAELERNLEVCPKCDHHMRMTARNRLHSLLDEGSLVELGSELEPKDVLKFRDSKKYKDRLASAQKETDEKDALVVMKGTLYGMPVVAAAFEFAFMGGSMGSVVGARFVRAVEQALEDNCPLICFSASGGARMQEALMSLMQMAKTSAALAKMQERGLPYISVLTDPTMGGVSASFAMLGDLNIAEPKALIGFAGPRVIEQTVREKLPPGFQRSEFLIEKGAIDMIVRRPEMRLKLASILAKLMNLPAPNPEAPREGVVVPPVPDQEPEA.

In terms of domain architecture, CoA carboxyltransferase N-terminal spans 23–292 (VWTKCDSCGQ…PNPEAPREGV (270 aa)). 4 residues coordinate Zn(2+): Cys-27, Cys-30, Cys-46, and Cys-49. The segment at 27 to 49 (CDSCGQVLYRAELERNLEVCPKC) adopts a C4-type zinc-finger fold. The tract at residues 285–304 (PEAPREGVVVPPVPDQEPEA) is disordered. Residues 295–304 (PPVPDQEPEA) are compositionally biased toward pro residues.

This sequence belongs to the AccD/PCCB family. As to quaternary structure, acetyl-CoA carboxylase is a heterohexamer composed of biotin carboxyl carrier protein (AccB), biotin carboxylase (AccC) and two subunits each of ACCase subunit alpha (AccA) and ACCase subunit beta (AccD). The cofactor is Zn(2+).

It is found in the cytoplasm. It carries out the reaction N(6)-carboxybiotinyl-L-lysyl-[protein] + acetyl-CoA = N(6)-biotinyl-L-lysyl-[protein] + malonyl-CoA. Its pathway is lipid metabolism; malonyl-CoA biosynthesis; malonyl-CoA from acetyl-CoA: step 1/1. Its function is as follows. Component of the acetyl coenzyme A carboxylase (ACC) complex. Biotin carboxylase (BC) catalyzes the carboxylation of biotin on its carrier protein (BCCP) and then the CO(2) group is transferred by the transcarboxylase to acetyl-CoA to form malonyl-CoA. This chain is Acetyl-coenzyme A carboxylase carboxyl transferase subunit beta, found in Escherichia coli O6:H1 (strain CFT073 / ATCC 700928 / UPEC).